Reading from the N-terminus, the 94-residue chain is DNA-directed RNA polymerase subunit omega (94 aa).

The protein belongs to the RNA polymerase subunit omega family. In terms of assembly, the RNAP catalytic core consists of 2 alpha, 1 beta, 1 beta' and 1 omega subunit. When a sigma factor is associated with the core the holoenzyme is formed, which can initiate transcription.

It catalyses the reaction RNA(n) + a ribonucleoside 5'-triphosphate = RNA(n+1) + diphosphate. In terms of biological role, promotes RNA polymerase assembly. Latches the N- and C-terminal regions of the beta' subunit thereby facilitating its interaction with the beta and alpha subunits. This chain is DNA-directed RNA polymerase subunit omega, found in Bifidobacterium longum subsp. infantis (strain ATCC 15697 / DSM 20088 / JCM 1222 / NCTC 11817 / S12).